A 367-amino-acid polypeptide reads, in one-letter code: Zinc metalloproteinase nas-22 (367 aa).

Positions 1 to 16 are cleaved as a signal peptide; the sequence is MKSFFILLSILQECYG. The Peptidase M12A domain occupies 41-237; it reads VLIRGSDEER…LMINKYYECS (197 aa). Asn56 and Asn85 each carry an N-linked (GlcNAc...) asparagine glycan. 4 disulfides stabilise this stretch: Cys88/Cys236, Cys111/Cys130, Cys238/Cys258, and Cys260/Cys269. His138 contributes to the Zn(2+) binding site. The active site involves Glu139. The Zn(2+) site is built by His142 and His148. Residues Asn169, Asn241, and Asn254 are each glycosylated (N-linked (GlcNAc...) asparagine). An EGF-like domain is found at 232-270; the sequence is KYYECSCANNLSCKNHGYPNPSNCSQCNCPYGFGGADCS. 2 N-linked (GlcNAc...) asparagine glycosylation sites follow: Asn287 and Asn322.

Requires Zn(2+) as cofactor. Expressed in uterine seam (utse) cell.

The protein resides in the secreted. Functionally, metalloprotease. The protein is Zinc metalloproteinase nas-22 (nas-22) of Caenorhabditis elegans.